A 220-amino-acid polypeptide reads, in one-letter code: tRNA (guanine-N(7)-)-methyltransferase (220 aa).

S-adenosyl-L-methionine contacts are provided by glutamate 46, aspartate 71, aspartate 100, and aspartate 122. Aspartate 122 is a catalytic residue. Substrate is bound by residues lysine 126, aspartate 158, and 196–199 (TEYE).

It belongs to the class I-like SAM-binding methyltransferase superfamily. TrmB family.

The enzyme catalyses guanosine(46) in tRNA + S-adenosyl-L-methionine = N(7)-methylguanosine(46) in tRNA + S-adenosyl-L-homocysteine. It participates in tRNA modification; N(7)-methylguanine-tRNA biosynthesis. In terms of biological role, catalyzes the formation of N(7)-methylguanine at position 46 (m7G46) in tRNA. This is tRNA (guanine-N(7)-)-methyltransferase from Malacoplasma penetrans (strain HF-2) (Mycoplasma penetrans).